Reading from the N-terminus, the 310-residue chain is Integrin-binding sialoprotein (310 aa).

Residues 1–16 form the signal peptide; it reads MKTVLILLSILGMACA. Residues Ser31, Ser62, Ser67, Ser75, Ser76, Ser98, and Ser106 each carry the phosphoserine modification. Residues 61 to 284 form a disordered region; that stretch reads QSSSDSSEEN…NGDPRGDNYR (224 aa). Positions 62-74 are enriched in low complexity; sequence SSSDSSEENGNGD. Acidic residues-rich tracts occupy residues 75-87 and 96-108; these read SSEE…ETSN and EDSD…ESEA. Asn110 carries an N-linked (GlcNAc...) asparagine glycan. Residue Thr144 is modified to Phosphothreonine. Positions 152-174 are enriched in acidic residues; that stretch reads DESDEEEEEEEEEENEAEVDDNE. Ser154 carries the post-translational modification Phosphoserine. A compositionally biased stretch (polar residues) spans 175–187; it reads QGINGTSSNSTEV. N-linked (GlcNAc...) asparagine glycosylation is found at Asn178 and Asn183. Acidic residues predominate over residues 198-208; that stretch reads NGEEDGEEESV. A compositionally biased stretch (polar residues) spans 209–227; sequence TEANTEGITVAGETTTSPN. Phosphoserine is present on Ser273. Positions 279–281 match the Integrin-binding motif motif; it reads RGD. Phosphoserine is present on Ser300. Sulfotyrosine is present on residues Tyr306 and Tyr307.

In terms of assembly, monomer. Interacts with integrins; the interaction promotes cell adhesion.

The protein resides in the secreted. Functionally, binds tightly to hydroxyapatite. Appears to form an integral part of the mineralized matrix. Probably important to cell-matrix interaction. Promotes adhesion and migration of various cells via the alpha-V/beta-3 integrin receptor (ITGAV:ITGB3). The chain is Integrin-binding sialoprotein (IBSP) from Bos taurus (Bovine).